A 105-amino-acid chain; its full sequence is Nucleoid-associated protein RPE_4812 (105 aa).

It belongs to the YbaB/EbfC family. Homodimer.

The protein localises to the cytoplasm. The protein resides in the nucleoid. Binds to DNA and alters its conformation. May be involved in regulation of gene expression, nucleoid organization and DNA protection. This is Nucleoid-associated protein RPE_4812 from Rhodopseudomonas palustris (strain BisA53).